The primary structure comprises 110 residues: Insulin (110 aa).

The first 24 residues, 1–24 (MALWTRLLPLLALLALLGPDPAQA), serve as a signal peptide directing secretion. 3 disulfides stabilise this stretch: cysteine 31/cysteine 96, cysteine 43/cysteine 109, and cysteine 95/cysteine 100. Residues 57 to 87 (EVEEQQGGQVELGGGPGAGLPQPLALEMALQ) constitute a propeptide, c peptide.

Belongs to the insulin family. In terms of assembly, heterodimer of a B chain and an A chain linked by two disulfide bonds.

It localises to the secreted. Insulin decreases blood glucose concentration. It increases cell permeability to monosaccharides, amino acids and fatty acids. It accelerates glycolysis, the pentose phosphate cycle, and glycogen synthesis in liver. In Ictidomys tridecemlineatus (Thirteen-lined ground squirrel), this protein is Insulin (INS).